The sequence spans 544 residues: CTP synthase (544 aa).

The interval 1–266 (MKKRFIFITG…DQIICHHFKL (266 aa)) is amidoligase domain. Ser14 is a binding site for CTP. Residue Ser14 coordinates UTP. Residues 15–20 (SLGKGI) and Asp72 each bind ATP. Residues Asp72 and Glu140 each coordinate Mg(2+). Residues 147-149 (DIE), 187-192 (KTKPTQ), and Lys223 each bind CTP. Residues 187–192 (KTKPTQ) and Lys223 contribute to the UTP site. The 251-residue stretch at 291–541 (TIGIIGKYIK…IKAAIQYKKI (251 aa)) folds into the Glutamine amidotransferase type-1 domain. Gly352 is an L-glutamine binding site. Residue Cys379 is the Nucleophile; for glutamine hydrolysis of the active site. L-glutamine is bound by residues 380-383 (LGMQ), Glu403, and Arg469. Active-site residues include His514 and Glu516.

It belongs to the CTP synthase family. As to quaternary structure, homotetramer.

The catalysed reaction is UTP + L-glutamine + ATP + H2O = CTP + L-glutamate + ADP + phosphate + 2 H(+). The enzyme catalyses L-glutamine + H2O = L-glutamate + NH4(+). It catalyses the reaction UTP + NH4(+) + ATP = CTP + ADP + phosphate + 2 H(+). The protein operates within pyrimidine metabolism; CTP biosynthesis via de novo pathway; CTP from UDP: step 2/2. With respect to regulation, allosterically activated by GTP, when glutamine is the substrate; GTP has no effect on the reaction when ammonia is the substrate. The allosteric effector GTP functions by stabilizing the protein conformation that binds the tetrahedral intermediate(s) formed during glutamine hydrolysis. Inhibited by the product CTP, via allosteric rather than competitive inhibition. Functionally, catalyzes the ATP-dependent amination of UTP to CTP with either L-glutamine or ammonia as the source of nitrogen. Regulates intracellular CTP levels through interactions with the four ribonucleotide triphosphates. The chain is CTP synthase from Buchnera aphidicola subsp. Baizongia pistaciae (strain Bp).